The following is a 146-amino-acid chain: Hemoglobin subunit beta (146 aa).

Val1 carries the N-acetylvaline modification. Residues 2-146 (HLTPDEKNAV…VANALAHKYH (145 aa)) form the Globin domain. Thr12 carries the phosphothreonine modification. Ser44 carries the post-translational modification Phosphoserine. N6-acetyllysine is present on Lys59. His63 contacts heme b. N6-acetyllysine is present on Lys82. Position 92 (His92) interacts with heme b. Cys93 carries the S-nitrosocysteine modification. Lys144 carries the post-translational modification N6-acetyllysine.

Belongs to the globin family. In terms of assembly, heterotetramer of two alpha chains and two beta chains. Red blood cells.

Its function is as follows. Involved in oxygen transport from the lung to the various peripheral tissues. This chain is Hemoglobin subunit beta (HBB), found in Piliocolobus badius (Western red colobus).